Here is a 218-residue protein sequence, read N- to C-terminus: Thiopurine S-methyltransferase (218 aa).

S-adenosyl-L-methionine contacts are provided by tryptophan 10, leucine 45, glutamate 66, and arginine 123.

Belongs to the class I-like SAM-binding methyltransferase superfamily. TPMT family.

The protein resides in the cytoplasm. The enzyme catalyses S-adenosyl-L-methionine + a thiopurine = S-adenosyl-L-homocysteine + a thiopurine S-methylether.. This Shewanella sp. (strain ANA-3) protein is Thiopurine S-methyltransferase.